Consider the following 384-residue polypeptide: Glucans biosynthesis protein C (384 aa).

A run of 10 helical transmembrane segments spans residues 17–37, 54–74, 91–111, 140–160, 173–193, 212–232, 240–260, 274–294, 311–331, and 338–358; these read AWLM…THSW, FIHA…SYML, VGIP…ILLQ, LWFL…FTWF, AISL…YAAI, FIVM…LAFI, FTTP…AYLL, TESV…FSLG, ASLF…AYIT, and LIGF…LYEI.

It belongs to the acyltransferase 3 family. OpgC subfamily.

Its subcellular location is the cell membrane. Its pathway is glycan metabolism; osmoregulated periplasmic glucan (OPG) biosynthesis. In terms of biological role, necessary for the succinyl substitution of periplasmic glucans. Could catalyze the transfer of succinyl residues from the cytoplasmic side of the membrane to the nascent glucan backbones on the periplasmic side of the membrane. This is Glucans biosynthesis protein C from Salmonella heidelberg (strain SL476).